The sequence spans 495 residues: Trimethylamine methyltransferase MttB (495 aa).

Residue Pyl-334 is a non-standard amino acid, pyrrolysine.

The protein belongs to the trimethylamine methyltransferase family. In terms of assembly, can form a complex with MttC.

It catalyses the reaction Co(I)-[trimethylamine-specific corrinoid protein] + trimethylamine + H(+) = methyl-Co(III)-[trimethylamine-specific corrinoid protein] + dimethylamine. It participates in one-carbon metabolism; methanogenesis from trimethylamine. Catalyzes the transfer of a methyl group from trimethylamine to the corrinoid cofactor of MttC. This Methanosarcina barkeri protein is Trimethylamine methyltransferase MttB.